The primary structure comprises 169 residues: Calfumirin-1 (169 aa).

4 consecutive EF-hand domains span residues 6 to 41 (NIVE…KKAF), 42 to 77 (NPER…DKAL), 93 to 128 (EVEE…TGAK), and 129 to 164 (DPEK…VQKL). Residues Asp-19, Asn-21, Asp-23, Glu-25, Glu-30, Asp-55, Asp-57, Asp-59, Lys-61, Glu-66, Asp-108, Asn-110, Asp-112, Glu-117, Asp-142, Asn-144, Asp-146, Thr-148, and Glu-153 each coordinate Ca(2+).

Its function is as follows. May be involved in the phase-shift of cells from growth to differentiation. The sequence is that of Calfumirin-1 (cafA) from Dictyostelium discoideum (Social amoeba).